The following is a 111-amino-acid chain: Large ribosomal subunit protein uL23 (111 aa).

It belongs to the universal ribosomal protein uL23 family. In terms of assembly, part of the 50S ribosomal subunit. Contacts protein L29, and trigger factor when it is bound to the ribosome.

Its function is as follows. One of the early assembly proteins it binds 23S rRNA. One of the proteins that surrounds the polypeptide exit tunnel on the outside of the ribosome. Forms the main docking site for trigger factor binding to the ribosome. In Chlamydia muridarum (strain MoPn / Nigg), this protein is Large ribosomal subunit protein uL23.